The primary structure comprises 218 residues: tRNA (guanine-N(7)-)-methyltransferase (218 aa).

Residues M1–P26 form a disordered region. A compositionally biased stretch (basic and acidic residues) spans V13–P26. 4 residues coordinate S-adenosyl-L-methionine: E45, E70, D97, and D119. The active site involves D119. K123 provides a ligand contact to substrate. The segment at R125–R130 is interaction with RNA. Substrate contacts are provided by residues D155 and T195–E198.

This sequence belongs to the class I-like SAM-binding methyltransferase superfamily. TrmB family.

The catalysed reaction is guanosine(46) in tRNA + S-adenosyl-L-methionine = N(7)-methylguanosine(46) in tRNA + S-adenosyl-L-homocysteine. It participates in tRNA modification; N(7)-methylguanine-tRNA biosynthesis. Catalyzes the formation of N(7)-methylguanine at position 46 (m7G46) in tRNA. This chain is tRNA (guanine-N(7)-)-methyltransferase, found in Lactobacillus delbrueckii subsp. bulgaricus (strain ATCC 11842 / DSM 20081 / BCRC 10696 / JCM 1002 / NBRC 13953 / NCIMB 11778 / NCTC 12712 / WDCM 00102 / Lb 14).